The sequence spans 243 residues: Phomoidride biosynthesis cluster protein B (243 aa).

Belongs to the tstB family.

In terms of biological role, phosphatidylethanolamine-binding protein; part of the gene cluster that mediates the biosynthesis of the antihypercholesterolemic agents phomoidrides which are dimeric anhydrides. Within the pathway, tstB is not essential for dimerization and its function has still to be determined. The pathway begins with the highly reducing polyketide synthase tstA that catalyzes the formation of a C12-fatty acyl-ACP, starting from one acetate and 5 malonate units. The hydrolase tstM is involved in the release of the C12-fatty acyl chain from phiA. The alkylcitrate synthase (ACS) tstJ and the alkylcitrate dehydratase (ACDH) tstI then give rise to decarboxylated monomeric anhydrides by coupling the C12-fatty acyl chain with oxalacetic acid. The cyclase tstC is responsible for the dimerization of the monomeric anhydrides which leads to the production of prephomoidride that contains the characteristic bicyclo[4.3.1]deca-1,6-diene system of phomoidrides. Iterative oxidation catalyzed by the alpha-ketoglutarate-dependent dioxygenase tstK produced then phomoidride A. Finally, the methyltransferase tstE converts phomoidride A to phomoidride B via an acetalization reaction. The phosphatidylethanolamine-binding protein tstB and tstN are not essential for dimerization and their functions have still to be determined. The chain is Phomoidride biosynthesis cluster protein B from Talaromyces stipitatus (strain ATCC 10500 / CBS 375.48 / QM 6759 / NRRL 1006) (Penicillium stipitatum).